Reading from the N-terminus, the 229-residue chain is 2,3-bisphosphoglycerate-dependent phosphoglycerate mutase (229 aa).

Substrate-binding positions include 7–14 (RHGQSEWN), 20–21 (TG), arginine 59, 86–89 (ERHY), lysine 97, 113–114 (RR), and 182–183 (GN). Residue histidine 8 is the Tele-phosphohistidine intermediate of the active site. Glutamate 86 serves as the catalytic Proton donor/acceptor.

Belongs to the phosphoglycerate mutase family. BPG-dependent PGAM subfamily.

The enzyme catalyses (2R)-2-phosphoglycerate = (2R)-3-phosphoglycerate. The protein operates within carbohydrate degradation; glycolysis; pyruvate from D-glyceraldehyde 3-phosphate: step 3/5. In terms of biological role, catalyzes the interconversion of 2-phosphoglycerate and 3-phosphoglycerate. In Listeria innocua serovar 6a (strain ATCC BAA-680 / CLIP 11262), this protein is 2,3-bisphosphoglycerate-dependent phosphoglycerate mutase.